A 219-amino-acid polypeptide reads, in one-letter code: Mitochondrial fission factor homolog A (219 aa).

The Cytoplasmic segment spans residues 1–199; the sequence is MAEINRMQYE…ENKERVKHEM (199 aa). The stretch at 164-194 forms a coiled coil; sequence DLALADAASLRRQIIKLNRRLLLLEEENKER. The chain crosses the membrane as a helical; Anchor for type IV membrane protein span at residues 200–217; it reads TMYSIIIIFGLLNSWLWL. Over 218–219 the chain is Extracellular; it reads RR.

This sequence belongs to the Tango11 family.

It is found in the mitochondrion outer membrane. Its subcellular location is the peroxisome. The protein resides in the cytoplasmic vesicle. It localises to the secretory vesicle. The protein localises to the synaptic vesicle. Functionally, plays a role in mitochondrial and peroxisomal fission. Promotes the recruitment and association of the fission mediator dynamin-related protein 1 (DNM1L) to the mitochondrial surface. This is Mitochondrial fission factor homolog A (mff-a) from Xenopus laevis (African clawed frog).